Consider the following 55-residue polypeptide: Large ribosomal subunit protein bL33 (55 aa).

This sequence belongs to the bacterial ribosomal protein bL33 family.

This Granulibacter bethesdensis (strain ATCC BAA-1260 / CGDNIH1) protein is Large ribosomal subunit protein bL33.